The chain runs to 251 residues: Small ribosomal subunit protein uS3 (251 aa).

Positions 22 to 93 (LNEFFTRELA…GIAIYAERVE (72 aa)) constitute a KH type-2 domain. Residues 223-251 (TVKSYKQTAEDETETDAPVEAEAEVEATA) are disordered. Residues 232–251 (EDETETDAPVEAEAEVEATA) are compositionally biased toward acidic residues.

Belongs to the universal ribosomal protein uS3 family. In terms of assembly, component of the small ribosomal subunit. Mature ribosomes consist of a small (40S) and a large (60S) subunit. The 40S subunit contains about 32 different proteins and 1 molecule of RNA (18S). The 60S subunit contains 45 different proteins and 3 molecules of RNA (25S, 5.8S and 5S).

It is found in the cytoplasm. Component of the ribosome, a large ribonucleoprotein complex responsible for the synthesis of proteins in the cell. The small ribosomal subunit (SSU) binds messenger RNAs (mRNAs) and translates the encoded message by selecting cognate aminoacyl-transfer RNA (tRNA) molecules. The large subunit (LSU) contains the ribosomal catalytic site termed the peptidyl transferase center (PTC), which catalyzes the formation of peptide bonds, thereby polymerizing the amino acids delivered by tRNAs into a polypeptide chain. The nascent polypeptides leave the ribosome through a tunnel in the LSU and interact with protein factors that function in enzymatic processing, targeting, and the membrane insertion of nascent chains at the exit of the ribosomal tunnel. The chain is Small ribosomal subunit protein uS3 (RPS3) from Candida albicans (strain SC5314 / ATCC MYA-2876) (Yeast).